Here is a 241-residue protein sequence, read N- to C-terminus: Capsid protein (241 aa).

A Bipartite nuclear localization signal motif is present at residues 1-26; it reads MSPASSWKRKRPSSSSAQASKKRRVY. Positions 1 to 30 are disordered; the sequence is MSPASSWKRKRPSSSSAQASKKRRVYRPAV.

It belongs to the geminiviridae capsid protein family. As to quaternary structure, homomultimer. Interacts with the movement protein. Binds to single-stranded and double-stranded viral DNA.

It is found in the virion. Its subcellular location is the host nucleus. Its function is as follows. Encapsidates the viral genome into characteristic twinned ('geminate') particles. Binds the genomic viral ssDNA and shuttles it into and out of the cell nucleus. Plays a role in protection of the genome from degradation, virus acquisition and transmission by insect vectors, infectivity, and systemic movement. The CP of monopartite geminiviruses is absolutely essential for virus movement. This Avena sativa (Oat) protein is Capsid protein.